Here is a 126-residue protein sequence, read N- to C-terminus: Basic phospholipase A2 1 (126 aa).

The propeptide occupies 1 to 7 (SNRPMPL). 7 disulfide bridges follow: Cys18–Cys78, Cys33–Cys125, Cys35–Cys51, Cys50–Cys106, Cys57–Cys99, Cys67–Cys92, and Cys85–Cys97. 3 residues coordinate Ca(2+): Tyr34, Gly36, and Gly38. His54 is a catalytic residue. Asp55 provides a ligand contact to Ca(2+). Asp100 is a catalytic residue.

It belongs to the phospholipase A2 family. Group I subfamily. D49 sub-subfamily. Heterodimer formed between two homologous isoforms: isoform 1 and isoform 2. It depends on Ca(2+) as a cofactor. As to expression, expressed by the venom gland.

It localises to the secreted. The catalysed reaction is a 1,2-diacyl-sn-glycero-3-phosphocholine + H2O = a 1-acyl-sn-glycero-3-phosphocholine + a fatty acid + H(+). Its function is as follows. PLA2 catalyzes the calcium-dependent hydrolysis of the 2-acyl groups in 3-sn-phosphoglycerides. This is Basic phospholipase A2 1 from Naja sagittifera (Andaman cobra).